A 165-amino-acid polypeptide reads, in one-letter code: Large ribosomal subunit protein uL11 (165 aa).

Arg-67 carries the N5-methylarginine modification.

The protein belongs to the universal ribosomal protein uL11 family. Component of the large ribosomal subunit (LSU). Mature N.crassa ribosomes consist of a small (40S) and a large (60S) subunit. The 40S small subunit contains 1 molecule of ribosomal RNA (18S rRNA) and at least 32 different proteins. The large 60S subunit contains 3 rRNA molecules (26S, 5.8S and 5S rRNA) and at least 42 different proteins.

The protein localises to the cytoplasm. Its function is as follows. Component of the ribosome, a large ribonucleoprotein complex responsible for the synthesis of proteins in the cell. The small ribosomal subunit (SSU) binds messenger RNAs (mRNAs) and translates the encoded message by selecting cognate aminoacyl-transfer RNA (tRNA) molecules. The large subunit (LSU) contains the ribosomal catalytic site termed the peptidyl transferase center (PTC), which catalyzes the formation of peptide bonds, thereby polymerizing the amino acids delivered by tRNAs into a polypeptide chain. The nascent polypeptides leave the ribosome through a tunnel in the LSU and interact with protein factors that function in enzymatic processing, targeting, and the membrane insertion of nascent chains at the exit of the ribosomal tunnel. This chain is Large ribosomal subunit protein uL11 (rpl-12), found in Neurospora crassa (strain ATCC 24698 / 74-OR23-1A / CBS 708.71 / DSM 1257 / FGSC 987).